A 381-amino-acid chain; its full sequence is Pentraxin-related protein PTX3 (381 aa).

A signal peptide spans Met-1–Ala-17. Intrachain disulfides connect Cys-179/Cys-357 and Cys-210/Cys-271. The Pentraxin (PTX) domain maps to Cys-179 to Ser-381. Asn-220 is a glycosylation site (N-linked (GlcNAc...) asparagine).

In terms of assembly, homooctamer; disulfide-linked. Binds to C1q.

The protein localises to the secreted. Its function is as follows. Plays a role in the regulation of innate resistance to pathogens, inflammatory reactions, possibly clearance of self-components and female fertility. This is Pentraxin-related protein PTX3 (Ptx3) from Mus musculus (Mouse).